The following is a 460-amino-acid chain: V-type ATP synthase beta chain (460 aa).

It belongs to the ATPase alpha/beta chains family.

Its function is as follows. Produces ATP from ADP in the presence of a proton gradient across the membrane. The V-type beta chain is a regulatory subunit. The protein is V-type ATP synthase beta chain of Acetivibrio thermocellus (strain ATCC 27405 / DSM 1237 / JCM 9322 / NBRC 103400 / NCIMB 10682 / NRRL B-4536 / VPI 7372) (Clostridium thermocellum).